The primary structure comprises 622 residues: Prolactin receptor (622 aa).

Residues 1–24 form the signal peptide; the sequence is MKENVASATVFTLLLFLNTCLLNG. Topologically, residues 25–234 are extracellular; the sequence is QLPPGKPEIF…QIPSDFTMND (210 aa). Fibronectin type-III domains lie at 27–128 and 129–229; these read PPGK…VQPD and PPLE…IPSD. Residues cysteine 36 and cysteine 46 are joined by a disulfide bond. Asparagine 59 carries an N-linked (GlcNAc...) asparagine glycan. Cysteines 75 and 86 form a disulfide. N-linked (GlcNAc...) asparagine glycosylation occurs at asparagine 104. Residues aspartate 211 and histidine 212 each contribute to the Zn(2+) site. Positions 215 to 219 match the WSXWS motif motif; that stretch reads WSAWS. A glycan (N-linked (GlcNAc...) asparagine) is linked at asparagine 233. Residues 235–258 traverse the membrane as a helical segment; it reads TTVWISVAVLSAVICLIIVWAVAL. Residues 259–622 lie on the Cytoplasmic side of the membrane; it reads KGYSMVTCIF…DPACFTHSFH (364 aa). Positions 267–275 match the Box 1 motif motif; the sequence is IFPPVPGPK. Disordered stretches follow at residues 326–378, 461–505, and 520–545; these read MSVH…YDPE, SSQT…GSAK, and ALSL…NNKE. A compositionally biased stretch (basic and acidic residues) spans 466-486; that stretch reads KSREEGKATQQREVESFHSET.

The protein belongs to the type I cytokine receptor family. Type 1 subfamily. In terms of assembly, homodimer upon hormone binding. Interacts with SMARCA1. Interacts with GH1. Interacts with CSH. Interacts with NEK3 and VAV2 and this interaction is prolactin-dependent. As to expression, expressed in breast, placenta, kidney, liver and pancreas.

The protein resides in the membrane. It localises to the secreted. In terms of biological role, this is a receptor for the anterior pituitary hormone prolactin (PRL). Acts as a prosurvival factor for spermatozoa by inhibiting sperm capacitation through suppression of SRC kinase activation and stimulation of AKT. Isoform 4 is unable to transduce prolactin signaling. Isoform 6 is unable to transduce prolactin signaling. The protein is Prolactin receptor (PRLR) of Homo sapiens (Human).